Reading from the N-terminus, the 72-residue chain is Translation initiation factor IF-1 (72 aa).

The region spanning 1-72 (MSKSDYIELE…TKGRITFRHK (72 aa)) is the S1-like domain.

It belongs to the IF-1 family. As to quaternary structure, component of the 30S ribosomal translation pre-initiation complex which assembles on the 30S ribosome in the order IF-2 and IF-3, IF-1 and N-formylmethionyl-tRNA(fMet); mRNA recruitment can occur at any time during PIC assembly.

It is found in the cytoplasm. In terms of biological role, one of the essential components for the initiation of protein synthesis. Stabilizes the binding of IF-2 and IF-3 on the 30S subunit to which N-formylmethionyl-tRNA(fMet) subsequently binds. Helps modulate mRNA selection, yielding the 30S pre-initiation complex (PIC). Upon addition of the 50S ribosomal subunit IF-1, IF-2 and IF-3 are released leaving the mature 70S translation initiation complex. The chain is Translation initiation factor IF-1 from Vesicomyosocius okutanii subsp. Calyptogena okutanii (strain HA).